The sequence spans 91 residues: MARSVKKGPFVDDHLMKKVLSAKAEGSKKPIKTWSRRSMVLPDMVGITFNVHNGRQFVPVYVTENHIGYKLGEFAPTRTFKGHKGSVQKKG.

It belongs to the universal ribosomal protein uS19 family.

In terms of biological role, protein S19 forms a complex with S13 that binds strongly to the 16S ribosomal RNA. The protein is Small ribosomal subunit protein uS19 of Sulfurimonas denitrificans (strain ATCC 33889 / DSM 1251) (Thiomicrospira denitrificans (strain ATCC 33889 / DSM 1251)).